We begin with the raw amino-acid sequence, 466 residues long: Cysteine--tRNA ligase (466 aa).

Cys-27 is a binding site for Zn(2+). Residues 29–39 carry the 'HIGH' region motif; the sequence is PTVYNYIHIGN. Zn(2+) is bound by residues Cys-207, His-232, and Glu-236. A 'KMSKS' region motif is present at residues 264-268; it reads KMSKS. Residue Lys-267 coordinates ATP.

It belongs to the class-I aminoacyl-tRNA synthetase family. Monomer. Zn(2+) is required as a cofactor.

It localises to the cytoplasm. The enzyme catalyses tRNA(Cys) + L-cysteine + ATP = L-cysteinyl-tRNA(Cys) + AMP + diphosphate. The sequence is that of Cysteine--tRNA ligase from Thermoanaerobacter pseudethanolicus (strain ATCC 33223 / 39E) (Clostridium thermohydrosulfuricum).